The following is a 334-amino-acid chain: Serine racemase (334 aa).

Glu13 contributes to the Mg(2+) binding site. 5 residues coordinate ATP: Ser31, Ser32, Ile33, Lys51, and Thr52. Active-site proton acceptor residues include Lys56 and Ser84. Lys56 is modified (N6-(pyridoxal phosphate)lysine). Asn86 is a binding site for pyridoxal 5'-phosphate. Gln89 is an ATP binding site. The residue at position 113 (Cys113) is an S-nitrosocysteine. Tyr121 is an ATP binding site. Asn154 contacts pyridoxal 5'-phosphate. Asp178 contacts Mg(2+). 5 residues coordinate pyridoxal 5'-phosphate: Gly185, Gly186, Gly187, Gly188, and Met189. Residues Glu210, Ala214, Asp216, and Asn247 each contribute to the Mg(2+) site. Ca(2+) contacts are provided by Glu210, Ala214, Asp216, and Asn247. Residues Glu210, Ala214, and Asp216 each coordinate Mn(2+). Lys279 provides a ligand contact to ATP. Ser313 contacts pyridoxal 5'-phosphate. Asn316 is a binding site for ATP.

It belongs to the serine/threonine dehydratase family. In terms of assembly, homodimer. Mg(2+) serves as cofactor. Mn(2+) is required as a cofactor. Requires Ca(2+) as cofactor. The cofactor is pyridoxal 5'-phosphate. Post-translationally, S-nitrosylated, leading to decrease the enzyme activity.

It carries out the reaction L-serine = D-serine. The enzyme catalyses L-serine = pyruvate + NH4(+). The catalysed reaction is D-serine = pyruvate + NH4(+). In terms of biological role, catalyzes the synthesis of D-serine from L-serine. D-serine is a key coagonist with glutamate at NMDA receptors. Has dehydratase activity towards both L-serine and D-serine. The polypeptide is Serine racemase (SRR) (Bos taurus (Bovine)).